Consider the following 501-residue polypeptide: Zinc finger and SCAN domain-containing protein 12 (501 aa).

Glycyl lysine isopeptide (Lys-Gly) (interchain with G-Cter in SUMO2) cross-links involve residues Lys-20 and Lys-26. Residues 51-132 enclose the SCAN box domain; the sequence is QFCYQETSGP…DLERELDELG (82 aa). The interval 175–194 is disordered; that stretch reads REAQEEQVSGVETGNEPRNV. Polar residues predominate over residues 180–194; that stretch reads EQVSGVETGNEPRNV. A Glycyl lysine isopeptide (Lys-Gly) (interchain with G-Cter in SUMO2) cross-link involves residue Lys-197. The interval 223 to 255 is disordered; that stretch reads EAHNPGEESSGISHEDSQPLRNENGVNSPANSE. A compositionally biased stretch (polar residues) spans 241–253; the sequence is PLRNENGVNSPAN. C2H2-type zinc fingers lie at residues 269–291, 297–319, 325–347, 353–375, 381–403, and 409–431; these read HGCD…KRVH, YKCE…KVVH, YKCN…QRLH, YHCN…LKSH, YQCL…QGVH, and YECN…QETH. Residues 429 to 450 are disordered; the sequence is ETHHKEKPFTQSGPIQQQRNHT. A compositionally biased stretch (polar residues) spans 437 to 447; it reads FTQSGPIQQQR. The C2H2-type 7 zinc-finger motif lies at 455–477; the sequence is YKCSVCGKAFIQKISLIEHEQIH. The C2H2-type 8; degenerate zinc finger occupies 483-501; sequence YKCAEGGKAFIQMSELTEH.

The protein belongs to the krueppel C2H2-type zinc-finger protein family. In terms of tissue distribution, testis specific.

It localises to the nucleus. Functionally, may be involved in transcriptional regulation. This chain is Zinc finger and SCAN domain-containing protein 12 (Zscan12), found in Mus musculus (Mouse).